The primary structure comprises 299 residues: HTH-type transcriptional regulator CysL (299 aa).

Residues 1 to 58 (MYYDVLKTFIAVVEEKNFTKAAEKLMISQPSVSLHIKNLEKEFQTALLNRSPKHFTTT) form the HTH lysR-type domain. The H-T-H motif DNA-binding region spans 18–37 (FTKAAEKLMISQPSVSLHIK).

Belongs to the LysR transcriptional regulatory family.

Its function is as follows. Transcriptional activator of the cysJI operon which is involved in sulfur assimilation. Also negatively regulates its own transcription. This is HTH-type transcriptional regulator CysL (cysL) from Bacillus subtilis (strain 168).